Consider the following 313-residue polypeptide: Protein FixB (313 aa).

255 to 283 (LYLAVGISGQIQHMVGANASQTIFAINKD) is a binding site for FAD.

This sequence belongs to the ETF alpha-subunit/FixB family. In terms of assembly, heterodimer of FixA and FixB.

Its pathway is amine and polyamine metabolism; carnitine metabolism. Functionally, required for anaerobic carnitine reduction. May bring reductant to CaiA. The protein is Protein FixB of Escherichia coli O157:H7.